The chain runs to 295 residues: Small ribosomal subunit biogenesis GTPase RsgA (295 aa).

The 161-residue stretch at 68 to 228 (KNLLTKPHVA…VVDTPGFANL (161 aa)) folds into the CP-type G domain. GTP-binding positions include 117 to 120 (NKMD) and 170 to 178 (GLSGVGKSS). 4 residues coordinate Zn(2+): Cys250, Cys255, His257, and Cys263.

It belongs to the TRAFAC class YlqF/YawG GTPase family. RsgA subfamily. In terms of assembly, monomer. Associates with 30S ribosomal subunit, binds 16S rRNA. It depends on Zn(2+) as a cofactor.

It is found in the cytoplasm. One of several proteins that assist in the late maturation steps of the functional core of the 30S ribosomal subunit. Helps release RbfA from mature subunits. May play a role in the assembly of ribosomal proteins into the subunit. Circularly permuted GTPase that catalyzes slow GTP hydrolysis, GTPase activity is stimulated by the 30S ribosomal subunit. This is Small ribosomal subunit biogenesis GTPase RsgA from Thermotoga petrophila (strain ATCC BAA-488 / DSM 13995 / JCM 10881 / RKU-1).